We begin with the raw amino-acid sequence, 555 residues long: Sulfite reductase [ferredoxin] 1 (555 aa).

Positions 69–161 form a cross-link, 3'-(S-cysteinyl)-tyrosine (Tyr-Cys); that stretch reads YTQREQGYDG…SVGLQTTEAC (93 aa). Residues Cys417, Cys423, Cys463, and Cys467 each coordinate [4Fe-4S] cluster. Cys467 contributes to the siroheme binding site.

It belongs to the nitrite and sulfite reductase 4Fe-4S domain family. Monomer. It depends on siroheme as a cofactor. [4Fe-4S] cluster serves as cofactor.

The catalysed reaction is hydrogen sulfide + 6 oxidized [2Fe-2S]-[ferredoxin] + 3 H2O = sulfite + 6 reduced [2Fe-2S]-[ferredoxin] + 7 H(+). Functionally, catalyzes the reduction of sulfite to sulfide, a step in the biosynthesis of sulfur-containing amino acids and cofactors. This chain is Sulfite reductase [ferredoxin] 1 (sir1), found in Mycolicibacterium paratuberculosis (strain ATCC BAA-968 / K-10) (Mycobacterium paratuberculosis).